A 412-amino-acid polypeptide reads, in one-letter code: MANVADTKLYDILGVPPGASENELKKAYRKLAKEYHPDKNPNAGDKFKEISFAYEVLSNPEKRELYDRYGEQGLREGSGGGGGMDDIFSHIFGGGLFGFMGNQSRSRNGRRRGEDMMHPLKVSLEDLYNGKTTKLQLSKNVLCSACSGQGGKSGAVQKCSACRGRGVRIMIRQLAPGMVQQMQSVCSDCNGEGEVINEKDRCKKCEGKKVIKEVKILEVHVDKGMKHGQRITFTGEADQAPGVEPGDIVLFVQEKEHEVFQRDGNDLHMTYKIGLVEALCGFQFTFKHLDARQIVVKYPPGKVIEPGCVRVVRGEGMPQYRNPFEKGDLYIKFDVQFPENNWINPDKLSELEDLLPSRPEVPNVIGETEEVELQEFDSTRGSGGGQRREAYNDSSDEESSSHHGPGVQCAHQ.

The J domain occupies Lys8–Gly70. Lys39 carries the post-translational modification N6-acetyllysine. Phosphoserine occurs at positions 78 and 123. A CR-type zinc finger spans residues Gly130 to Val214. Lys134 participates in a covalent cross-link: Glycyl lysine isopeptide (Lys-Gly) (interchain with G-Cter in SUMO2). Residues Cys143 and Cys146 each contribute to the Zn(2+) site. The CXXCXGXG motif repeat unit spans residues Cys143 to Gly150. An N6-acetyllysine modification is found at Lys152. Cys159, Cys162, Cys186, Cys189, Cys202, and Cys205 together coordinate Zn(2+). CXXCXGXG motif repeat units follow at residues Cys159–Gly166, Cys186–Gly193, and Cys202–Lys209. Residues Ile365–Gln412 form a disordered region. Position 391 is a phosphotyrosine (Tyr391). 2 positions are modified to phosphoserine: Ser394 and Ser395. The residue at position 409 (Cys409) is a Cysteine methyl ester. Cys409 carries the S-farnesyl cysteine lipid modification. Residues Ala410–Gln412 constitute a propeptide, removed in mature form.

It localises to the membrane. Functionally, co-chaperone of Hsc70. Stimulates ATP hydrolysis and the folding of unfolded proteins mediated by HSPA1A/B (in vitro). This Rattus norvegicus (Rat) protein is DnaJ homolog subfamily A member 2 (Dnaja2).